The following is a 172-amino-acid chain: Small ribosomal subunit protein uS5 (172 aa).

One can recognise an S5 DRBM domain in the interval 17 to 80; that stretch reads LREKMIAINR…EEARRNLAKI (64 aa).

The protein belongs to the universal ribosomal protein uS5 family. As to quaternary structure, part of the 30S ribosomal subunit. Contacts proteins S4 and S8.

Functionally, with S4 and S12 plays an important role in translational accuracy. Located at the back of the 30S subunit body where it stabilizes the conformation of the head with respect to the body. The polypeptide is Small ribosomal subunit protein uS5 (Variovorax paradoxus (strain S110)).